The chain runs to 443 residues: Dihydroorotate dehydrogenase (quinone), mitochondrial (443 aa).

The N-terminal 21 residues, 1 to 21 (MYQRSLFRGVAQGLKRSSVRF), are a transit peptide targeting the mitochondrion. The helical transmembrane segment at 38 to 54 (WKLLSVIGSFTAGVAIY) threads the bilayer. Residues 122-126 (AGFDK) and Ser146 each bind FMN. Residue Lys126 participates in substrate binding. Ser168 is subject to Phosphoserine. Position 171-175 (171-175 (NRYGF)) interacts with substrate. FMN contacts are provided by Asn234 and Asn264. A substrate-binding site is contributed by 264–269 (NVSSPN). The active-site Nucleophile is Ser267. Residue Lys306 participates in FMN binding. 335–336 (NT) contacts substrate. FMN is bound by residues Gly358, Gly387, and 408–409 (YT).

The protein belongs to the dihydroorotate dehydrogenase family. Type 2 subfamily. The cofactor is FMN.

The protein resides in the mitochondrion inner membrane. It catalyses the reaction (S)-dihydroorotate + a quinone = orotate + a quinol. It participates in pyrimidine metabolism; UMP biosynthesis via de novo pathway; orotate from (S)-dihydroorotate (quinone route): step 1/1. Its function is as follows. In the de novo pyrimidine biosynthesis pathway, catalyzes the stereospecific oxidation of (S)-dihydroorotate to orotate with reduction of flavin and the transfer of electrons to ubiquinone, which is part of the respiratory chain. Does not use fumarate and NAD as electron acceptors. The polypeptide is Dihydroorotate dehydrogenase (quinone), mitochondrial (ura3) (Schizosaccharomyces pombe (strain 972 / ATCC 24843) (Fission yeast)).